The following is a 78-amino-acid chain: D-alanyl carrier protein (78 aa).

Residues 1–78 form the Carrier domain; the sequence is MEFREQVLDL…KIVEVLEELR (78 aa). O-(pantetheine 4'-phosphoryl)serine is present on S36.

It belongs to the DltC family. 4'-phosphopantetheine is transferred from CoA to a specific serine of apo-DCP.

It localises to the cytoplasm. It functions in the pathway cell wall biogenesis; lipoteichoic acid biosynthesis. In terms of biological role, carrier protein involved in the D-alanylation of lipoteichoic acid (LTA). The loading of thioester-linked D-alanine onto DltC is catalyzed by D-alanine--D-alanyl carrier protein ligase DltA. The DltC-carried D-alanyl group is further transferred to cell membrane phosphatidylglycerol (PG) by forming an ester bond, probably catalyzed by DltD. D-alanylation of LTA plays an important role in modulating the properties of the cell wall in Gram-positive bacteria, influencing the net charge of the cell wall. The protein is D-alanyl carrier protein of Staphylococcus xylosus.